Here is a 144-residue protein sequence, read N- to C-terminus: Large ribosomal subunit protein uL13 (144 aa).

The disordered stretch occupies residues 125–144; sequence YRGPEHPHQAQKPQPLEVKA.

This sequence belongs to the universal ribosomal protein uL13 family. As to quaternary structure, part of the 50S ribosomal subunit.

Its function is as follows. This protein is one of the early assembly proteins of the 50S ribosomal subunit, although it is not seen to bind rRNA by itself. It is important during the early stages of 50S assembly. This chain is Large ribosomal subunit protein uL13, found in Aquifex aeolicus (strain VF5).